Reading from the N-terminus, the 518-residue chain is DNA-binding protein Ikaros (518 aa).

Residues 1–51 (METDEAQDMSQVSGKESPPISDVPDDADEPMPVPEDLSTTTGGQQSVKNER) are disordered. Residues 37 to 47 (LSTTTGGQQSV) show a composition bias toward polar residues. C2H2-type zinc fingers lie at residues 117-139 (LKCDICGIICIGPNVLMVHNRSH), 145-167 (FQCNQCGASFTQKGNLLRHIKLH), 173-195 (FKCHLCNYACRRRDALTGHLRTH), and 201-224 (HKCGYCGRSYKQRSSLEEHKERCH). The interval 381–405 (SVSSERDASPSNSCQDSTDTESNNE) is disordered. 2 consecutive C2H2-type zinc fingers follow at residues 461 to 483 (YKCEHCRVLFLDHVMYTIHMGCH) and 489 to 513 (FECNMCGYHSQDRYEFSSHITRGEH).

The protein belongs to the Ikaros C2H2-type zinc-finger protein family. Expressed in embryonic hematopoietic organs such as the bursa of Fabricius, thymus and spleen. In the adult, expressed in spleen, thymus, bursa and peripheral blood leukocytes.

Its subcellular location is the nucleus. Functionally, binds and activates the enhancer (delta-A element) of the CD3-delta gene. Functions in the specification and the maturation of the T-lymphocyte. Also interacts with a critical control element in the TDT (terminal deoxynucleotidyltransferase) promoter as well as with the promoters for other genes expressed during early stages of B- and T-cell development. Function is isoform-specific and is modulated by dominant-negative inactive isoforms. This chain is DNA-binding protein Ikaros (IKZF1), found in Gallus gallus (Chicken).